A 113-amino-acid chain; its full sequence is Nucleoid-associated protein FMG_0513 (113 aa).

Residues 1-44 (MGNKFRGGMPGMGNMGNMMKQMQKMQRQMEETQKRLEETEVTAT) are disordered. The segment covering 15-26 (MGNMMKQMQKMQ) has biased composition (low complexity). The span at 27–38 (RQMEETQKRLEE) shows a compositional bias: basic and acidic residues.

It belongs to the YbaB/EbfC family. As to quaternary structure, homodimer.

The protein localises to the cytoplasm. It localises to the nucleoid. Its function is as follows. Binds to DNA and alters its conformation. May be involved in regulation of gene expression, nucleoid organization and DNA protection. This chain is Nucleoid-associated protein FMG_0513, found in Finegoldia magna (strain ATCC 29328 / DSM 20472 / WAL 2508) (Peptostreptococcus magnus).